A 426-amino-acid chain; its full sequence is Histidine--tRNA ligase (426 aa).

It belongs to the class-II aminoacyl-tRNA synthetase family. As to quaternary structure, homodimer.

It localises to the cytoplasm. It carries out the reaction tRNA(His) + L-histidine + ATP = L-histidyl-tRNA(His) + AMP + diphosphate + H(+). The polypeptide is Histidine--tRNA ligase (Streptococcus thermophilus (strain CNRZ 1066)).